The chain runs to 552 residues: Protein TRM32 (552 aa).

The disordered stretch occupies residues 295 to 379 (TDLPRDSSTS…NKTAEKTETL (85 aa)). A compositionally biased stretch (basic and acidic residues) spans 331–351 (VRAEKEEKYEVQEERSQENHL). Residues 352–371 (DSSNQRILQQEPDSVPSTNK) show a composition bias toward polar residues.

This is Protein TRM32 (TRM32) from Arabidopsis thaliana (Mouse-ear cress).